The chain runs to 500 residues: TBC1 domain family member 10A (500 aa).

The span at 1–10 (MAKSSRENGP) shows a compositional bias: basic and acidic residues. Residues 1-45 (MAKSSRENGPREPAAGGSLSGTRESLAQGPDAATADELSSLGSDS) form a disordered region. Ser39, Ser40, and Ser45 each carry phosphoserine. Residues 111 to 299 (GIPPSLRGRA…RVWDMFFCEG (189 aa)) enclose the Rab-GAP TBC domain. Disordered regions lie at residues 396-415 (AEPG…LPPD) and 420-500 (SSKA…DTYL). Residue Ser407 is modified to Phosphoserine. Polar residues predominate over residues 438-453 (TSAQLDKSPGLSQATV). At Thr477 the chain carries Phosphothreonine. A binding to the PDZ domain of EBP50 region spans residues 497 to 500 (DTYL).

Binds to the first PDZ domain of NHERF1 and NHERF2. Expressed in most tissues, except for skeletal muscle.

It localises to the cell projection. Its subcellular location is the microvillus. Functionally, GTPase-activating protein (GAP) specific for RAB27A and RAB35. Does not show GAP activity for RAB2A, RAB3A and RAB4A. This Mus musculus (Mouse) protein is TBC1 domain family member 10A (Tbc1d10a).